The following is a 957-amino-acid chain: Glycine dehydrogenase (decarboxylating) (957 aa).

Residue Lys708 is modified to N6-(pyridoxal phosphate)lysine.

Belongs to the GcvP family. As to quaternary structure, the glycine cleavage system is composed of four proteins: P, T, L and H. It depends on pyridoxal 5'-phosphate as a cofactor.

It catalyses the reaction N(6)-[(R)-lipoyl]-L-lysyl-[glycine-cleavage complex H protein] + glycine + H(+) = N(6)-[(R)-S(8)-aminomethyldihydrolipoyl]-L-lysyl-[glycine-cleavage complex H protein] + CO2. Functionally, the glycine cleavage system catalyzes the degradation of glycine. The P protein binds the alpha-amino group of glycine through its pyridoxal phosphate cofactor; CO(2) is released and the remaining methylamine moiety is then transferred to the lipoamide cofactor of the H protein. The chain is Glycine dehydrogenase (decarboxylating) from Salmonella agona (strain SL483).